Consider the following 465-residue polypeptide: Intraflagellar transport protein 54 (465 aa).

Disordered regions lie at residues 119-301 (VRSN…GFTM) and 347-366 (LHGD…DKKP). Residues 144–207 (LEALAREKAE…KQKQQQQQQQ (64 aa)) adopt a coiled-coil conformation. Basic and acidic residues predominate over residues 146 to 198 (ALAREKAEKERQRREQEQQERERKERERQEKEREEREKHELESRERAEAEQWK). Positions 199 to 220 (QKQQQQQQQQQSAISPQKSPPK) are enriched in low complexity. The span at 222–242 (RFADDDKTRVEEHQPVIERPH) shows a compositional bias: basic and acidic residues.

The protein belongs to the TRAF3IP1 family.

The protein localises to the cell projection. The protein resides in the cilium. It is found in the flagellum. Its subcellular location is the cytoplasm. It localises to the cytoskeleton. The protein localises to the flagellum axoneme. The protein resides in the flagellum basal body. Functionally, component of the intraflagellar transport complex B (IFT-B) involved in flagellar assembly. This Giardia intestinalis (strain ATCC 50803 / WB clone C6) (Giardia lamblia) protein is Intraflagellar transport protein 54.